The sequence spans 996 residues: Alanine--tRNA ligase, chloroplastic/mitochondrial (996 aa).

His-677, His-681, Cys-779, and His-783 together coordinate Zn(2+).

This sequence belongs to the class-II aminoacyl-tRNA synthetase family. Monomer. It depends on Zn(2+) as a cofactor.

The protein localises to the plastid. Its subcellular location is the chloroplast. The protein resides in the mitochondrion. The catalysed reaction is tRNA(Ala) + L-alanine + ATP = L-alanyl-tRNA(Ala) + AMP + diphosphate. In terms of biological role, catalyzes the attachment of alanine to tRNA(Ala) in a two-step reaction: alanine is first activated by ATP to form Ala-AMP and then transferred to the acceptor end of tRNA(Ala). Also edits incorrectly charged tRNA(Ala) via its editing domain. The protein is Alanine--tRNA ligase, chloroplastic/mitochondrial of Oryza sativa subsp. indica (Rice).